A 314-amino-acid polypeptide reads, in one-letter code: Hydroxyethylthiazole kinase (314 aa).

Positions 1–13 are enriched in low complexity; it reads MSNSASSFADVSS. A disordered region spans residues 1–24; sequence MSNSASSFADVSSGCTAGTPVPAD. A substrate-binding site is contributed by Met-70. Residues Arg-145 and Ser-217 each contribute to the ATP site. Gly-244 provides a ligand contact to substrate.

This sequence belongs to the Thz kinase family. Requires Mg(2+) as cofactor.

It catalyses the reaction 5-(2-hydroxyethyl)-4-methylthiazole + ATP = 4-methyl-5-(2-phosphooxyethyl)-thiazole + ADP + H(+). It functions in the pathway cofactor biosynthesis; thiamine diphosphate biosynthesis; 4-methyl-5-(2-phosphoethyl)-thiazole from 5-(2-hydroxyethyl)-4-methylthiazole: step 1/1. In terms of biological role, catalyzes the phosphorylation of the hydroxyl group of 4-methyl-5-beta-hydroxyethylthiazole (THZ). This chain is Hydroxyethylthiazole kinase, found in Bifidobacterium longum subsp. infantis (strain ATCC 15697 / DSM 20088 / JCM 1222 / NCTC 11817 / S12).